A 281-amino-acid chain; its full sequence is 18S rRNA (guanine-N(7))-methyltransferase (281 aa).

The span at Leu212–Thr231 shows a compositional bias: polar residues. The segment at Leu212–Phe281 is disordered. The span at Arg242–Lys256 shows a compositional bias: basic and acidic residues.

Belongs to the class I-like SAM-binding methyltransferase superfamily. BUD23/WBSCR22 family. As to quaternary structure, heterodimer with TRMT112; this heterodimerization is necessary for the metabolic stability and activity of the catalytic subunit BUD23. Interacts with GRIP1. Post-translationally, may be ubiquitinated and targeted to degradation in response to pro-inflammatory cytokine signaling.

The protein localises to the nucleus. Its subcellular location is the nucleoplasm. The protein resides in the cytoplasm. It is found in the perinuclear region. The enzyme catalyses a guanosine in 18S rRNA + S-adenosyl-L-methionine = an N(7)-methylguanosine in 18S rRNA + S-adenosyl-L-homocysteine. S-adenosyl-L-methionine-dependent methyltransferase that specifically methylates the N(7) position of a guanine in 18S rRNA. Requires the methyltransferase adapter protein TRM112 for full rRNA methyltransferase activity. Involved in the pre-rRNA processing steps leading to small-subunit rRNA production independently of its RNA-modifying catalytic activity. Important for biogenesis end export of the 40S ribosomal subunit independent on its methyltransferase activity. Locus-specific steroid receptor coactivator. Potentiates transactivation by glucocorticoid (NR3C1), mineralocorticoid (NR3C2), androgen (AR) and progesterone (PGR) receptors. Required for the maintenance of open chromatin at the TSC22D3/GILZ locus to facilitate NR3C1 loading on the response elements. Required for maintenance of dimethylation on histone H3 'Lys-79' (H3K79me2), although direct histone methyltransferase activity is not observed in vitro. This Mus musculus (Mouse) protein is 18S rRNA (guanine-N(7))-methyltransferase.